Here is a 141-residue protein sequence, read N- to C-terminus: Small ribosomal subunit protein uS9c (141 aa).

The protein belongs to the universal ribosomal protein uS9 family.

Its subcellular location is the plastid. The protein resides in the chloroplast. The polypeptide is Small ribosomal subunit protein uS9c (rps9) (Tupiella akineta (Green alga)).